We begin with the raw amino-acid sequence, 349 residues long: N-formyl peptide receptor 3 (349 aa).

Residues 1 to 27 lie on the Extracellular side of the membrane; sequence METNFSIPLNETEEVLPEPAGHTVLWI. Residues Asn4 and Asn10 are each glycosylated (N-linked (GlcNAc...) asparagine). A helical transmembrane segment spans residues 28-50; it reads FSLLVHGVTFIFGVLGNGLVIWV. Topologically, residues 51–61 are cytoplasmic; that stretch reads AGFLMTRTVNT. A helical transmembrane segment spans residues 62-83; the sequence is ICYLNLALADFSFSAILPFHMV. Residues 84 to 100 lie on the Extracellular side of the membrane; sequence SVAMREKWPFGSFLCKL. An intrachain disulfide couples Cys98 to Cys176. The helical transmembrane segment at 101-121 threads the bilayer; the sequence is VHVMIDINLFVSVYLITIIAL. The Cytoplasmic segment spans residues 122-140; the sequence is DRCICVLHPAWAQNHRTMS. Residues 141 to 162 traverse the membrane as a helical segment; the sequence is LAKRVMTGLWILTIVLTLPNFI. At 163 to 205 the chain is on the extracellular side; the sequence is FWTTISTTNGDTYCIFNFPFWGDTAVERLNVFITMAKVFLILH. Residues 206–226 form a helical membrane-spanning segment; it reads FIIGFSMPMSIITVCYGIIAA. At 227–242 the chain is on the cytoplasmic side; sequence KIHRNHMIKSSRPLRV. The helical transmembrane segment at 243–266 threads the bilayer; that stretch reads FAAVVASFFICWFPYELIGILMAV. At 267–286 the chain is on the extracellular side; that stretch reads WLKEMLLNGKYKIILVLINP. A helical transmembrane segment spans residues 287–306; that stretch reads TSSLAFFNSCLNPILYVFLG. Residues 307-349 lie on the Cytoplasmic side of the membrane; the sequence is SNFQERLIRSLPTSLERALTEVPDSAQTSNTHTTSASPPEETE. Positions 327–349 are disordered; the sequence is EVPDSAQTSNTHTTSASPPEETE. Residues 331 to 343 are compositionally biased toward polar residues; that stretch reads SAQTSNTHTTSAS.

It belongs to the G-protein coupled receptor 1 family.

It localises to the cell membrane. Low affinity receptor for N-formyl-methionyl peptides, which are powerful neutrophils chemotactic factors. Binding of FMLP to the receptor causes activation of neutrophils. This response is mediated via a G-protein that activates a phosphatidylinositol-calcium second messenger system. The protein is N-formyl peptide receptor 3 (FPR3) of Gorilla gorilla gorilla (Western lowland gorilla).